We begin with the raw amino-acid sequence, 407 residues long: Biotin synthase (407 aa).

The region spanning 47–277 (WFGRRVKLNY…DVEVRIAGGR (231 aa)) is the Radical SAM core domain. The [4Fe-4S] cluster site is built by cysteine 65, cysteine 69, and cysteine 72. Residues cysteine 109, cysteine 142, cysteine 202, and arginine 272 each coordinate [2Fe-2S] cluster. Residues 368–407 (GGGVCAPAPAATTPRPAEEPRTDLVAVRRRGAGTDLAPNA) form a disordered region. Low complexity predominate over residues 373–382 (APAPAATTPR).

It belongs to the radical SAM superfamily. Biotin synthase family. Homodimer. The cofactor is [4Fe-4S] cluster. [2Fe-2S] cluster is required as a cofactor.

It carries out the reaction (4R,5S)-dethiobiotin + (sulfur carrier)-SH + 2 reduced [2Fe-2S]-[ferredoxin] + 2 S-adenosyl-L-methionine = (sulfur carrier)-H + biotin + 2 5'-deoxyadenosine + 2 L-methionine + 2 oxidized [2Fe-2S]-[ferredoxin]. Its pathway is cofactor biosynthesis; biotin biosynthesis; biotin from 7,8-diaminononanoate: step 2/2. Its function is as follows. Catalyzes the conversion of dethiobiotin (DTB) to biotin by the insertion of a sulfur atom into dethiobiotin via a radical-based mechanism. This chain is Biotin synthase, found in Streptomyces coelicolor (strain ATCC BAA-471 / A3(2) / M145).